The sequence spans 195 residues: Holliday junction branch migration complex subunit RuvA (195 aa).

The interval 1–64 (MIASIRGIIQ…EDALTLYGFS (64 aa)) is domain I. The domain II stretch occupies residues 65–142 (DPAQRNLFEQ…DLRQLSGTTP (78 aa)). Residues 143-151 (GNVSTLDRE) are flexible linker. The interval 151-195 (ELTDILISLGYSATEAAAAIAALPGDAPPTLEERLRLALRYFGSA) is domain III.

This sequence belongs to the RuvA family. In terms of assembly, homotetramer. Forms an RuvA(8)-RuvB(12)-Holliday junction (HJ) complex. HJ DNA is sandwiched between 2 RuvA tetramers; dsDNA enters through RuvA and exits via RuvB. An RuvB hexamer assembles on each DNA strand where it exits the tetramer. Each RuvB hexamer is contacted by two RuvA subunits (via domain III) on 2 adjacent RuvB subunits; this complex drives branch migration. In the full resolvosome a probable DNA-RuvA(4)-RuvB(12)-RuvC(2) complex forms which resolves the HJ.

The protein localises to the cytoplasm. Functionally, the RuvA-RuvB-RuvC complex processes Holliday junction (HJ) DNA during genetic recombination and DNA repair, while the RuvA-RuvB complex plays an important role in the rescue of blocked DNA replication forks via replication fork reversal (RFR). RuvA specifically binds to HJ cruciform DNA, conferring on it an open structure. The RuvB hexamer acts as an ATP-dependent pump, pulling dsDNA into and through the RuvAB complex. HJ branch migration allows RuvC to scan DNA until it finds its consensus sequence, where it cleaves and resolves the cruciform DNA. The sequence is that of Holliday junction branch migration complex subunit RuvA from Chloroflexus aurantiacus (strain ATCC 29364 / DSM 637 / Y-400-fl).